We begin with the raw amino-acid sequence, 393 residues long: Chorismate synthase (393 aa).

The NADP(+) site is built by Arg-40 and Arg-46. Residues 129–131 (RSS), 249–250 (QA), Gly-301, 316–320 (KPIPT), and Arg-342 contribute to the FMN site.

Belongs to the chorismate synthase family. As to quaternary structure, homotetramer. FMNH2 is required as a cofactor.

It catalyses the reaction 5-O-(1-carboxyvinyl)-3-phosphoshikimate = chorismate + phosphate. Its pathway is metabolic intermediate biosynthesis; chorismate biosynthesis; chorismate from D-erythrose 4-phosphate and phosphoenolpyruvate: step 7/7. Functionally, catalyzes the anti-1,4-elimination of the C-3 phosphate and the C-6 proR hydrogen from 5-enolpyruvylshikimate-3-phosphate (EPSP) to yield chorismate, which is the branch point compound that serves as the starting substrate for the three terminal pathways of aromatic amino acid biosynthesis. This reaction introduces a second double bond into the aromatic ring system. The protein is Chorismate synthase of Pelobacter propionicus (strain DSM 2379 / NBRC 103807 / OttBd1).